Here is a 312-residue protein sequence, read N- to C-terminus: tRNA dimethylallyltransferase (312 aa).

13-20 contributes to the ATP binding site; the sequence is GPTAVGKT. 15-20 provides a ligand contact to substrate; sequence TAVGKT. Interaction with substrate tRNA stretches follow at residues 38-41 and 163-167; these read DSVQ and QRVVR.

Belongs to the IPP transferase family. Monomer. It depends on Mg(2+) as a cofactor.

The catalysed reaction is adenosine(37) in tRNA + dimethylallyl diphosphate = N(6)-dimethylallyladenosine(37) in tRNA + diphosphate. Its function is as follows. Catalyzes the transfer of a dimethylallyl group onto the adenine at position 37 in tRNAs that read codons beginning with uridine, leading to the formation of N6-(dimethylallyl)adenosine (i(6)A). This chain is tRNA dimethylallyltransferase, found in Exiguobacterium sibiricum (strain DSM 17290 / CCUG 55495 / CIP 109462 / JCM 13490 / 255-15).